The sequence spans 557 residues: Formate--tetrahydrofolate ligase (557 aa).

66–73 (TPAGEGKS) contributes to the ATP binding site.

This sequence belongs to the formate--tetrahydrofolate ligase family.

The enzyme catalyses (6S)-5,6,7,8-tetrahydrofolate + formate + ATP = (6R)-10-formyltetrahydrofolate + ADP + phosphate. It functions in the pathway one-carbon metabolism; tetrahydrofolate interconversion. The protein is Formate--tetrahydrofolate ligase of Clostridium botulinum (strain ATCC 19397 / Type A).